The following is a 158-amino-acid chain: Regulator of sigma D (158 aa).

Belongs to the Rsd/AlgQ family. Interacts with RpoD.

The protein localises to the cytoplasm. In terms of biological role, binds RpoD and negatively regulates RpoD-mediated transcription activation by preventing the interaction between the primary sigma factor RpoD with the catalytic core of the RNA polymerase and with promoter DNA. May be involved in replacement of the RNA polymerase sigma subunit from RpoD to RpoS during the transition from exponential growth to the stationary phase. This Escherichia fergusonii (strain ATCC 35469 / DSM 13698 / CCUG 18766 / IAM 14443 / JCM 21226 / LMG 7866 / NBRC 102419 / NCTC 12128 / CDC 0568-73) protein is Regulator of sigma D.